The sequence spans 116 residues: Vesicle-associated membrane protein 2 (116 aa).

Residues 1–28 (MSATAATVPPAAPAGEGGPPAPPPNLTS) form a disordered region. Serine 2 is subject to N-acetylserine. The Cytoplasmic segment spans residues 2–94 (SATAATVPPA…KRKYWWKNLK (93 aa)). Residues 31–91 (RLQQTQAQVD…AKLKRKYWWK (61 aa)) form the v-SNARE coiled-coil homology domain. The interval 92–116 (NLKMMIILGVICAIILIIIIVYFST) is required for interaction with SEPT8. Residues 95 to 114 (MMIILGVICAIILIIIIVYF) traverse the membrane as a helical; Anchor for type IV membrane protein segment. The Vesicular portion of the chain corresponds to 115–116 (ST).

This sequence belongs to the synaptobrevin family. In terms of assembly, part of the SNARE core complex containing SNAP25, VAMP2 and STX1A; this complex constitutes the basic catalytic machinery of the complex neurotransmitter release apparatus. Recruited to the SNARE complex following binding of the SNARE complex component STX1A to STXBP1. This complex binds to CPLX1. Interacts with VAPA and VAPB. Interacts (via N-terminus) with KCNB1 (via N-terminus and C-terminus); stimulates the channel inactivation rate of KCNB1. Interacts with POPDC1 and STX4. Interacts with WDFY2, PRKCZ and PRKCI. Forms a complex with WDFY2 and PRKCZ. Interacts with SEPT8; the interaction inhibits interaction of VAMP2 with SYP. Interacts with SYP; the interaction is inhibited by interaction with SEPT8. Interacts with PICALM. Interacts with alpha-synuclein/SNCA. Interacts with STX3 isoform 3B. Phosphorylated by PRKCZ in vitro and this phosphorylation is increased in the presence of WDFY2. Post-translationally, (Microbial infection) Targeted and hydrolyzed by C.botulinum neurotoxin type B (BoNT/B, botB); 20 hours after treatment of spinal cord cells almost all the protein has been digested. BoNT/B hydrolyzes the 76-Gln-|-Phe-77 bond and inhibits neurotransmitter release. In terms of processing, (Microbial infection) Targeted and hydrolyzed by C.tetani toxin (tetX); 20 hours after treatment of spinal cord cells almost all the protein has been digested. Tetanus toxin hydrolyzes the 76-Gln-|-Phe-77 bond and inhibits neurotransmitter release. Expressed in the outer plexiform layer of the retina (at protein level).

The protein localises to the cytoplasmic vesicle. Its subcellular location is the secretory vesicle. The protein resides in the synaptic vesicle membrane. It localises to the cell membrane. Involved in the targeting and/or fusion of transport vesicles to their target membrane. Major SNARE protein of synaptic vesicles which mediates fusion of synaptic vesicles to release neurotransmitters. Essential for fast vesicular exocytosis and activity-dependent neurotransmitter release as well as fast endocytosis that mediates rapid reuse of synaptic vesicles. Modulates the gating characteristics of the delayed rectifier voltage-dependent potassium channel KCNB1. The chain is Vesicle-associated membrane protein 2 (Vamp2) from Mus musculus (Mouse).